Here is a 63-residue protein sequence, read N- to C-terminus: Conotoxin Cal6.28 (63 aa).

The first 22 residues, 1–22 (MKLTCVLIVAVLILTACQVIAA), serve as a signal peptide directing secretion. Disulfide bonds link cysteine 34–cysteine 45, cysteine 37–cysteine 51, and cysteine 44–cysteine 58.

The protein belongs to the conotoxin O1 superfamily. As to expression, expressed by the venom duct.

The protein localises to the secreted. Probable neurotoxin. The protein is Conotoxin Cal6.28 of Californiconus californicus (California cone).